The chain runs to 141 residues: Cystatin (141 aa).

The signal sequence occupies residues 1-26 (MVHSQLPVAAPLRLLCALLLLPSATM). In terms of domain architecture, Cystatin spans 29–129 (GGLSPRSVTD…CHFQVWSRPW (101 aa)). The Secondary area of contact motif lies at 73-77 (QVVAG). 2 disulfide bridges follow: cysteine 91–cysteine 107 and cysteine 120–cysteine 140.

Belongs to the cystatin family. Expressed at a low level by the venom gland (at protein level).

The protein localises to the secreted. Inhibits various C1 cysteine proteases including cathepsin L, papain and cathepsin B. This protein has no toxic activity and its function in the venom is unknown. It may play a role as a housekeeping or regulatory protein. This Oxyuranus scutellatus scutellatus (Australian taipan) protein is Cystatin.